The following is a 273-amino-acid chain: MAIHLYKTSTPSTRKGAVDSQVKSNPRTNLIYGQHRCGKGRNARGIITARHRGGGHKRLYRKIDFRRNEKDISGRIVTIEYDPNRNAYICLIHYGDGEKRYILHPRGAIIGDTIVSGTEVPISMGNALPLTDMPLGTAIHNIEITLGKGGQLARAAGAVAKLIAKEGKSATLRLPSGEVRLISKNCSATVGQVGNVGVNQKSLGRAGSKCWLGKRPVVRGVVMNPVDHPHGGGEGRAPIGRKKPTTPWGYPALGRRSRKRNKYSDIFILRRRK.

Disordered stretches follow at residues 1–20 (MAIH…AVDS) and 224–254 (NPVD…PALG).

Belongs to the universal ribosomal protein uL2 family. Part of the 50S ribosomal subunit.

The protein localises to the plastid. The protein resides in the chloroplast. The polypeptide is Large ribosomal subunit protein uL2cz/uL2cy (rpl2-A) (Nuphar advena (Common spatterdock)).